The primary structure comprises 108 residues: Large ribosomal subunit protein bL31B (108 aa).

The tract at residues 86-108 (KPETVVEDVLPKGKKKSPAKKKK) is disordered. The span at 97–108 (KGKKKSPAKKKK) shows a compositional bias: basic residues.

It belongs to the bacterial ribosomal protein bL31 family. Type B subfamily. As to quaternary structure, part of the 50S ribosomal subunit.

This chain is Large ribosomal subunit protein bL31B, found in Chlamydia trachomatis serovar L2 (strain ATCC VR-902B / DSM 19102 / 434/Bu).